The following is a 171-amino-acid chain: Secretion monitor (171 aa).

The signal sequence occupies residues 1–36 (MIGILNRWRQFGRRYFWPHLLLGMVAASLGLPTSLN).

Belongs to the SecM family.

It localises to the cytoplasm. The protein resides in the cytosol. Its subcellular location is the periplasm. Its function is as follows. Regulates secA expression by translational coupling of the secM secA operon. Translational pausing at a specific Pro residue 5 residues before the end of the protein may allow disruption of a mRNA repressor helix that normally suppresses secA translation initiation. The protein is Secretion monitor of Pectobacterium carotovorum subsp. carotovorum (strain PC1).